Consider the following 176-residue polypeptide: UBA-like domain-containing protein 1 (176 aa).

Positions 87 to 176 (SESFHGGGGS…RAHPAMEAER (90 aa)) are disordered. The span at 120 to 137 (TPSWPTAASPPGGPQQHQ) shows a compositional bias: low complexity. Residues 138–150 (PQPPLWTPAPPSP) show a composition bias toward pro residues. The segment covering 166–176 (PRAHPAMEAER) has biased composition (basic and acidic residues).

This sequence belongs to the UBALD family.

The chain is UBA-like domain-containing protein 1 (Ubald1) from Mus musculus (Mouse).